Reading from the N-terminus, the 623-residue chain is Activator of C kinase protein 1 (623 aa).

A disordered region spans residues 141-230; that stretch reads KESLGSPAVQ…GSSGGEDKLS (90 aa). The segment covering 152–161 has biased composition (polar residues); it reads ASISSGNRIS. A compositionally biased stretch (basic and acidic residues) spans 176 to 193; it reads SESRILQEKVYRTEEKAP. Glycyl lysine isopeptide (Lys-Gly) (interchain with G-Cter in ubiquitin) cross-links involve residues Lys-184 and Lys-191. Over residues 206–215 the composition is skewed to polar residues; that stretch reads KINQPPTGSA. 4 Sel1-like repeats span residues 318–361, 408–444, 495–531, and 576–611; these read PPAM…KLNN, SACM…QKGD, PLAQ…AAQP, and ARTE…RMGF.

This Saccharomyces cerevisiae (strain ATCC 204508 / S288c) (Baker's yeast) protein is Activator of C kinase protein 1 (ACK1).